Reading from the N-terminus, the 644-residue chain is Core protein VP4 (644 aa).

The protein belongs to the orbivirus VP4 family.

The protein resides in the virion. The VP4 protein is one of the five proteins (with VP1, VP3, VP6 and VP7) which form the inner capsid of the virus. In Bluetongue virus 13 (isolate USA) (BTV 13), this protein is Core protein VP4 (Segment-4).